Reading from the N-terminus, the 67-residue chain is Toxin Cex8 (67 aa).

Residue alanine 1 is a signal peptide. Residues 2-65 (KEGYLVNIYT…SYPYPEKSCG (64 aa)) enclose the LCN-type CS-alpha/beta domain. 4 disulfide bridges follow: cysteine 13/cysteine 64, cysteine 17/cysteine 40, cysteine 26/cysteine 45, and cysteine 30/cysteine 47. Cysteine 64 carries the post-translational modification Cysteine amide. A propeptide spanning residues 65–67 (GRK) is cleaved from the precursor.

It belongs to the long (4 C-C) scorpion toxin superfamily. Sodium channel inhibitor family. Beta subfamily. In terms of tissue distribution, expressed by the venom gland.

Its subcellular location is the secreted. Beta toxins bind voltage-independently at site-4 of sodium channels (Nav) and shift the voltage of activation toward more negative potentials thereby affecting sodium channel activation and promoting spontaneous and repetitive firing. The sequence is that of Toxin Cex8 from Centruroides exilicauda (Bark scorpion).